A 179-amino-acid polypeptide reads, in one-letter code: Transcription initiation factor TFIID subunit 10 (179 aa).

Residues 1-23 (MNDPEQYEPSSSTESVLMPPPAL) form a disordered region.

This sequence belongs to the TAF10 family. Component of the TFIID basal transcription factor complex, composed of TATA-box-binding protein tbp-1, and a number of TBP-associated factors (TAFs).

It is found in the nucleus. The TFIID basal transcription factor complex plays a major role in the initiation of RNA polymerase II (Pol II)-dependent transcription. TFIID recognizes and binds promoters via its subunit tbp-1, a TATA-box-binding protein, and promotes assembly of the pre-initiation complex (PIC). The TFIID complex consists of tbp-1 and TBP-associated factors (TAFs), including taf-10. Essential for early embryonic development, but not required for transcription of some genes; probably acts via activating transcription initiation by RNA Pol II, as part of the TFIID complex. In Caenorhabditis elegans, this protein is Transcription initiation factor TFIID subunit 10.